We begin with the raw amino-acid sequence, 669 residues long: UvrABC system protein B (669 aa).

In terms of domain architecture, Helicase ATP-binding spans 27–414; that stretch reads ESLQGEHKFQ…EARVIEQVIR (388 aa). 40–47 provides a ligand contact to ATP; it reads GATGTGKT. Positions 93-116 match the Beta-hairpin motif; the sequence is YYDYYQPEAYIPVTDTYIEKTASI. The region spanning 431-597 is the Helicase C-terminal domain; sequence QVDDLYGEIQ…PINKRANNAI (167 aa). In terms of domain architecture, UVR spans 628 to 663; it reads PDLIQQLEEKMQEAAKKQEFEVAAIYRDRIQHLRDR.

This sequence belongs to the UvrB family. As to quaternary structure, forms a heterotetramer with UvrA during the search for lesions. Interacts with UvrC in an incision complex.

It is found in the cytoplasm. In terms of biological role, the UvrABC repair system catalyzes the recognition and processing of DNA lesions. A damage recognition complex composed of 2 UvrA and 2 UvrB subunits scans DNA for abnormalities. Upon binding of the UvrA(2)B(2) complex to a putative damaged site, the DNA wraps around one UvrB monomer. DNA wrap is dependent on ATP binding by UvrB and probably causes local melting of the DNA helix, facilitating insertion of UvrB beta-hairpin between the DNA strands. Then UvrB probes one DNA strand for the presence of a lesion. If a lesion is found the UvrA subunits dissociate and the UvrB-DNA preincision complex is formed. This complex is subsequently bound by UvrC and the second UvrB is released. If no lesion is found, the DNA wraps around the other UvrB subunit that will check the other stand for damage. The chain is UvrABC system protein B from Synechocystis sp. (strain ATCC 27184 / PCC 6803 / Kazusa).